The sequence spans 178 residues: Probable DNA-directed RNA polymerase subunit delta (178 aa).

The HTH HARE-type domain maps to 14–81; that stretch reads KSFIDMAYTL…GENLWGLRDW (68 aa). Residues 114 to 178 form a disordered region; the sequence is LGDDDADEDD…AFEDAEDFND (65 aa). Residues 116-178 show a composition bias toward acidic residues; sequence DDDADEDDDI…AFEDAEDFND (63 aa).

Belongs to the RpoE family. As to quaternary structure, RNAP is composed of a core of 2 alpha, a beta and a beta' subunits. The core is associated with a delta subunit and one of several sigma factors.

Its function is as follows. Participates in both the initiation and recycling phases of transcription. In the presence of the delta subunit, RNAP displays an increased specificity of transcription, a decreased affinity for nucleic acids, and an increased efficiency of RNA synthesis because of enhanced recycling. The protein is Probable DNA-directed RNA polymerase subunit delta of Staphylococcus epidermidis (strain ATCC 35984 / DSM 28319 / BCRC 17069 / CCUG 31568 / BM 3577 / RP62A).